The following is a 706-amino-acid chain: Mitochondrial intermediate peptidase, mitochondrial (706 aa).

Residues Met1–Asp29 constitute a mitochondrion transit peptide. The interval Asn212–Arg238 is disordered. Low complexity predominate over residues Thr214–Arg227. His491 contacts Zn(2+). Glu492 is an active-site residue. 2 residues coordinate Zn(2+): His495 and Glu520.

The protein belongs to the peptidase M3 family. Requires Zn(2+) as cofactor.

It is found in the mitochondrion. Functionally, aminopeptidase which cleaves preproteins, imported into the mitochondrion, to their mature size. Could cleave both preproteins and preprotein intermediates already cleaved by the mitochondrial processing peptidase (MPP). This Arabidopsis thaliana (Mouse-ear cress) protein is Mitochondrial intermediate peptidase, mitochondrial.